The primary structure comprises 180 residues: UPF0227 protein YcfP (180 aa).

The protein belongs to the UPF0227 family.

The protein is UPF0227 protein YcfP of Escherichia coli O7:K1 (strain IAI39 / ExPEC).